The following is a 541-amino-acid chain: Protopine 6-monooxygenase (541 aa).

The helical transmembrane segment at L9–V29 threads the bilayer. C476 lines the heme pocket.

It belongs to the cytochrome P450 family. Requires heme as cofactor.

The protein resides in the endoplasmic reticulum membrane. It carries out the reaction protopine + reduced [NADPH--hemoprotein reductase] + O2 = 6-hydroxyprotopine + oxidized [NADPH--hemoprotein reductase] + H2O + H(+). It functions in the pathway alkaloid biosynthesis. In terms of biological role, catalyzes the conversion of protopine and allocryptopine to dihydrosanguinarine and dihydrochelerythrine, respectively, in the biosynthesis of isoquinoline alkaloid sanguinarine. This is Protopine 6-monooxygenase (CYP82N3) from Papaver somniferum (Opium poppy).